A 234-amino-acid chain; its full sequence is Orotidine 5'-phosphate decarboxylase (234 aa).

Residues Asp-14, Lys-36, 63 to 72 (DMKLLDIDNT), Thr-118, Arg-179, Gln-188, Gly-208, and Arg-209 contribute to the substrate site. Lys-65 serves as the catalytic Proton donor.

This sequence belongs to the OMP decarboxylase family. Type 1 subfamily. As to quaternary structure, homodimer.

It catalyses the reaction orotidine 5'-phosphate + H(+) = UMP + CO2. It functions in the pathway pyrimidine metabolism; UMP biosynthesis via de novo pathway; UMP from orotate: step 2/2. Catalyzes the decarboxylation of orotidine 5'-monophosphate (OMP) to uridine 5'-monophosphate (UMP). In Rhizobium meliloti (strain 1021) (Ensifer meliloti), this protein is Orotidine 5'-phosphate decarboxylase.